Here is a 276-residue protein sequence, read N- to C-terminus: 3-methyl-2-oxobutanoate hydroxymethyltransferase (276 aa).

2 residues coordinate Mg(2+): D44 and D83. 3-methyl-2-oxobutanoate is bound by residues 44 to 45, D83, and K113; that span reads DS. A Mg(2+)-binding site is contributed by E115. E182 (proton acceptor) is an active-site residue.

Belongs to the PanB family. In terms of assembly, homodecamer; pentamer of dimers. Requires Mg(2+) as cofactor.

The protein resides in the cytoplasm. The enzyme catalyses 3-methyl-2-oxobutanoate + (6R)-5,10-methylene-5,6,7,8-tetrahydrofolate + H2O = 2-dehydropantoate + (6S)-5,6,7,8-tetrahydrofolate. The protein operates within cofactor biosynthesis; (R)-pantothenate biosynthesis; (R)-pantoate from 3-methyl-2-oxobutanoate: step 1/2. In terms of biological role, catalyzes the reversible reaction in which hydroxymethyl group from 5,10-methylenetetrahydrofolate is transferred onto alpha-ketoisovalerate to form ketopantoate. The protein is 3-methyl-2-oxobutanoate hydroxymethyltransferase of Clostridium acetobutylicum (strain ATCC 824 / DSM 792 / JCM 1419 / IAM 19013 / LMG 5710 / NBRC 13948 / NRRL B-527 / VKM B-1787 / 2291 / W).